Reading from the N-terminus, the 293-residue chain is Caspase-6 (293 aa).

The segment at 1–20 is disordered; sequence MSSEPPPRRARGPGEEQNMT. The propeptide occupies 1–23; sequence MSSEPPPRRARGPGEEQNMTEID. The tract at residues 42–44 is tri-arginine exosite; the sequence is KRR. S79 carries the phosphoserine modification. Residue H121 is part of the active site. Positions 125-142 are 130's region; sequence NHIYAYDAKIEIQTLTGL. The active site involves C163. The propeptide occupies 180-193; that stretch reads HRTDTPDANLTQVD. Phosphoserine is present on S257. S-palmitoyl cysteine attachment occurs at residues C264 and C277.

Belongs to the peptidase C14A family. As to quaternary structure, heterotetramer that consists of two anti-parallel arranged heterodimers, each one formed by a 18 kDa (p18) and a 11 kDa (p11) subunits. Interacts with BIRC6/bruce. Interacts with RIPK3. In terms of assembly, heterotetramer that consists of two anti-parallel arranged heterodimers, each one formed by a 18 kDa (Caspase-6 subunit p18) and a 11 kDa (Caspase-6 subunit p11) subunit. In terms of processing, phosphorylated by NUAK1; phosphorylation inhibits self-activation. Phosphorylation at Ser-257 by AMP-activated protein kinase (PRKAA1 or PRKAA2) inhibits autocleavage, preventing caspase activation, thereby preventing hepatocyte apoptosis. Palmitoylation by ZDHHC17 blocks dimerization and subsequent activation, leading to inhibit the cysteine protease activity. Post-translationally, can be cleaved and activated by different caspases, depending on the context. Cleaved and activated by caspase-8 (CASP8) and subsequently by caspase-3 (CASP3). Can also undergo autoactivation by mediating autocleavage at Asp-179 and Asp-193, while it is not able to cleave its N-terminal disordered prodomain. Cleaved and activated by CASP1, possibly in the context of inflammation.

It localises to the cytoplasm. The protein localises to the nucleus. It catalyses the reaction Strict requirement for Asp at position P1 and has a preferred cleavage sequence of Val-Glu-His-Asp-|-.. With respect to regulation, during activation, the N-terminal disordered prodomain is removed by cleavage. Concomitantly, double cleavage gives rise to a large 18-kDa and a small 11-kDa subunit. The two large and two small subunits then assemble to form the active CASP6 complex. Can be cleaved and activated by different caspases, depending on the context. Cleaved and activated by caspase-8 (CASP8) and subsequently by caspase-3 (CASP3). Can also undergo autoactivation by mediating autocleavage at Asp-179 and Asp-193, while it is not able to cleave its N-terminal disordered prodomain. Intramolecular cleavage at Asp-193 is a prerequisite for CASP6 self-activation. Cleaved and activated by CASP1 in neurons, possibly in the context of inflammation. Phosphorylation at Ser-257 inhibits autocleavage, preventing caspase activation. Cysteine protease that plays essential roles in programmed cell death, axonal degeneration, development and innate immunity. Acts as a non-canonical executioner caspase during apoptosis: localizes in the nucleus and cleaves the nuclear structural protein NUMA1 and lamin A/LMNA thereby inducing nuclear shrinkage and fragmentation. Lamin-A/LMNA cleavage is required for chromatin condensation and nuclear disassembly during apoptotic execution. Acts as a regulator of liver damage by promoting hepatocyte apoptosis: in absence of phosphorylation by AMP-activated protein kinase (AMPK), catalyzes cleavage of BID, leading to cytochrome c release, thereby participating in nonalcoholic steatohepatitis. Cleaves PARK7/DJ-1 in cells undergoing apoptosis. Involved in intrinsic apoptosis by mediating cleavage of RIPK1. Furthermore, cleaves many transcription factors such as NF-kappa-B and cAMP response element-binding protein/CREBBP. Cleaves phospholipid scramblase proteins XKR4 and XKR9. In addition to apoptosis, involved in different forms of programmed cell death. Plays an essential role in defense against viruses by acting as a central mediator of the ZBP1-mediated pyroptosis, apoptosis, and necroptosis (PANoptosis), independently of its cysteine protease activity. PANoptosis is a unique inflammatory programmed cell death, which provides a molecular scaffold that allows the interactions and activation of machinery required for inflammasome/pyroptosis, apoptosis and necroptosis. Mechanistically, interacts with RIPK3 and enhances the interaction between RIPK3 and ZBP1, leading to ZBP1-mediated inflammasome activation and cell death. Plays an essential role in axon degeneration during axon pruning which is the remodeling of axons during neurogenesis but not apoptosis. Regulates B-cell programs both during early development and after antigen stimulation. In Bos taurus (Bovine), this protein is Caspase-6.